A 365-amino-acid polypeptide reads, in one-letter code: UDP-N-acetylglucosamine--N-acetylmuramyl-(pentapeptide) pyrophosphoryl-undecaprenol N-acetylglucosamine transferase (365 aa).

Residues 19–21, Asn-131, Arg-170, Ser-201, Ile-255, 274–279, and Gln-300 contribute to the UDP-N-acetyl-alpha-D-glucosamine site; these read TGG and ALTVTE.

Belongs to the glycosyltransferase 28 family. MurG subfamily.

It is found in the cell inner membrane. It catalyses the reaction di-trans,octa-cis-undecaprenyl diphospho-N-acetyl-alpha-D-muramoyl-L-alanyl-D-glutamyl-meso-2,6-diaminopimeloyl-D-alanyl-D-alanine + UDP-N-acetyl-alpha-D-glucosamine = di-trans,octa-cis-undecaprenyl diphospho-[N-acetyl-alpha-D-glucosaminyl-(1-&gt;4)]-N-acetyl-alpha-D-muramoyl-L-alanyl-D-glutamyl-meso-2,6-diaminopimeloyl-D-alanyl-D-alanine + UDP + H(+). Its pathway is cell wall biogenesis; peptidoglycan biosynthesis. Cell wall formation. Catalyzes the transfer of a GlcNAc subunit on undecaprenyl-pyrophosphoryl-MurNAc-pentapeptide (lipid intermediate I) to form undecaprenyl-pyrophosphoryl-MurNAc-(pentapeptide)GlcNAc (lipid intermediate II). In Acinetobacter baumannii (strain ATCC 17978 / DSM 105126 / CIP 53.77 / LMG 1025 / NCDC KC755 / 5377), this protein is UDP-N-acetylglucosamine--N-acetylmuramyl-(pentapeptide) pyrophosphoryl-undecaprenol N-acetylglucosamine transferase.